The primary structure comprises 532 residues: Putative F-box/LRR-repeat protein At3g42770 (532 aa).

The 46-residue stretch at 1 to 46 (MNCLPDELLVQILSFLPTKEATSTSLLSKRWRTLFTLSPNLDFDNS) folds into the F-box domain. LRR repeat units lie at residues 113–135 (VSELHLRIDYTKRCHLPSEIFTS), 279–305 (IRNVKTLHLTSSTVKVILLCCKGEIPM), and 398–420 (MNDLKKMQLTEDLLKLPKASPKL).

The protein is Putative F-box/LRR-repeat protein At3g42770 of Arabidopsis thaliana (Mouse-ear cress).